The sequence spans 76 residues: uncharacterized protein (76 aa).

The protein belongs to the IIV-6 342R family.

This is an uncharacterized protein from Invertebrate iridescent virus 3 (IIV-3).